The chain runs to 216 residues: MTDPTSIKHQTTLTSGTSADFTQASEPFALFAEWFSEANKSELNDPNAMALATVDDSGLPDVRMVLMKGYDEDGFVFYSHKASQKGQELAGNPKAALLFHWKSLRRQVRIRGLVTPVTDEEADAYFATRPKQAQLGAWASKQSQPLESRFAFEQAIAKVAAQYIIGEVPRPPGWSGWRITPVRMEFWHDRPFRLHDRIEFRRDAAGQPWTKVRMYP.

FMN-binding positions include 63–68, 78–79, K85, and Q107; these read RMVLMK and YS. K68 is a substrate binding site. Substrate-binding residues include Y125 and R129. FMN contacts are provided by residues 142–143 and W187; that span reads QS. Position 193-195 (193-195) interacts with substrate; that stretch reads RLH. Residue R197 participates in FMN binding.

This sequence belongs to the pyridoxamine 5'-phosphate oxidase family. As to quaternary structure, homodimer. Requires FMN as cofactor.

It catalyses the reaction pyridoxamine 5'-phosphate + O2 + H2O = pyridoxal 5'-phosphate + H2O2 + NH4(+). It carries out the reaction pyridoxine 5'-phosphate + O2 = pyridoxal 5'-phosphate + H2O2. It participates in cofactor metabolism; pyridoxal 5'-phosphate salvage; pyridoxal 5'-phosphate from pyridoxamine 5'-phosphate: step 1/1. The protein operates within cofactor metabolism; pyridoxal 5'-phosphate salvage; pyridoxal 5'-phosphate from pyridoxine 5'-phosphate: step 1/1. Its function is as follows. Catalyzes the oxidation of either pyridoxine 5'-phosphate (PNP) or pyridoxamine 5'-phosphate (PMP) into pyridoxal 5'-phosphate (PLP). The protein is Pyridoxine/pyridoxamine 5'-phosphate oxidase of Bradyrhizobium sp. (strain BTAi1 / ATCC BAA-1182).